The following is a 1765-amino-acid chain: RANBP2-like and GRIP domain-containing protein 8 (1765 aa).

At Thr19 the chain carries Phosphothreonine. Ser21 bears the Phosphoserine mark. 3 TPR repeats span residues 26 to 59 (SMKGFYFAKLYYEAKEYDLAKKYICTYINVQERD), 60 to 93 (PKAHRFLGLLYELEENTEKAVECYRRSVELNPTQ), and 648 to 681 (EDAHITFAILDAVNGNIEDAVTAFESIKSVVSYW). The disordered stretch occupies residues 760-804 (GPLYKNGSLRNADSEIKHSTPSPTKYSLSPSKSYKYSPETPPRWT). Residues 778–797 (STPSPTKYSLSPSKSYKYSP) show a composition bias toward low complexity. The region spanning 1036 to 1172 (HFEPVVQMPE…FEECQRLLLD (137 aa)) is the RanBD1 1 domain. 2 disordered regions span residues 1216-1247 (TEEENKGSGTGVAGASDTTIKPNAENTGPTLE) and 1306-1330 (AKLNQSGTSVGTDEESVVTQEEERD). Polar residues predominate over residues 1231–1244 (SDTTIKPNAENTGP). Positions 1317 to 1329 (TDEESVVTQEEER) are enriched in acidic residues. Residues 1333-1469 (YFEPVVPLPD…FDEAKTAQEK (137 aa)) form the RanBD1 2 domain. Polar residues predominate over residues 1580 to 1593 (NNSETSSVAQSGSE). Disordered regions lie at residues 1580 to 1621 (NNSE…KNLS) and 1746 to 1765 (KGKLAAVAQDEEENPSRSSG). Residues 1594 to 1617 (SKVEPKKCELSKNSDIEQSSDSKV) are compositionally biased toward basic and acidic residues. Positions 1702–1752 (REKSAANLEYLKNVLLQFIFLKPGSERERLLPVINTMLQLSPEEKGKLAAV) constitute a GRIP domain.

Interacts with GTP-bound ARL1.

This Homo sapiens (Human) protein is RANBP2-like and GRIP domain-containing protein 8 (RGPD8).